We begin with the raw amino-acid sequence, 560 residues long: Membrane protein insertase YidC (560 aa).

Transmembrane regions (helical) follow at residues Ile-5 to Phe-25, Ala-334 to Phe-354, Tyr-357 to Phe-377, Leu-431 to Ile-451, Leu-476 to Leu-496, and Phe-522 to Trp-542.

This sequence belongs to the OXA1/ALB3/YidC family. Type 1 subfamily. In terms of assembly, interacts with the Sec translocase complex via SecD. Specifically interacts with transmembrane segments of nascent integral membrane proteins during membrane integration.

It is found in the cell inner membrane. Required for the insertion and/or proper folding and/or complex formation of integral membrane proteins into the membrane. Involved in integration of membrane proteins that insert both dependently and independently of the Sec translocase complex, as well as at least some lipoproteins. Aids folding of multispanning membrane proteins. The sequence is that of Membrane protein insertase YidC from Rickettsia rickettsii (strain Sheila Smith).